We begin with the raw amino-acid sequence, 151 residues long: Putative olfactory receptor 13C6 (151 aa).

Topologically, residues 1–27 (MVSANQTASVTEFILLGLSAHPKLEKT) are extracellular. A glycan (N-linked (GlcNAc...) asparagine) is linked at asparagine 5. A helical membrane pass occupies residues 28-48 (FFVLILLMYLVILLGNGVLIL). The Cytoplasmic segment spans residues 49–61 (MTVSNSHLHMPMY). Residues 62–82 (FFLGNLSFLDICYTTSSVPLI) form a helical membrane-spanning segment. Residues 83-100 (LDSFLTPRKTISFSACAV) lie on the Extracellular side of the membrane. The helical transmembrane segment at 101 to 121 (QMFLSFAMGATECVLLSMMAF) threads the bilayer.

Belongs to the G-protein coupled receptor 1 family.

The protein resides in the cell membrane. Functionally, odorant receptor. The protein is Putative olfactory receptor 13C6 of Homo sapiens (Human).